We begin with the raw amino-acid sequence, 229 residues long: ATP synthase subunit a (229 aa).

6 helical membrane-spanning segments follow: residues 25–45 (ADAIAYTWLIIALLLILSMLA), 82–102 (FFPLIATLAIFILVSNLIGLV), 104–124 (GFFPPTANINTTAACAVIVFV), 142–162 (FLGPILWLAPMMFFIEVIGHF), 181–201 (LVLMIFFGLAPFLVPLPMMLM), and 202–222 (GVLVSFIQAFVFMLLAMIYIQ).

It belongs to the ATPase A chain family. In terms of assembly, F-type ATPases have 2 components, CF(1) - the catalytic core - and CF(0) - the membrane proton channel. CF(1) has five subunits: alpha(3), beta(3), gamma(1), delta(1), epsilon(1). CF(0) has three main subunits: a(1), b(2) and c(9-12). The alpha and beta chains form an alternating ring which encloses part of the gamma chain. CF(1) is attached to CF(0) by a central stalk formed by the gamma and epsilon chains, while a peripheral stalk is formed by the delta and b chains.

Its subcellular location is the cell inner membrane. Key component of the proton channel; it plays a direct role in the translocation of protons across the membrane. The protein is ATP synthase subunit a of Geotalea uraniireducens (strain Rf4) (Geobacter uraniireducens).